Reading from the N-terminus, the 139-residue chain is Histone H2B.11 (139 aa).

Residues 1–39 (MAPKAEKKPAEKKPVEEKAEKKPKAEKRVPGAKEGGGEK) show a composition bias toward basic and acidic residues. Residues 1–47 (MAPKAEKKPAEKKPVEEKAEKKPKAEKRVPGAKEGGGEKKGKKKAKK) are disordered. N6-acetyllysine occurs at positions 7 and 27. Residue K135 forms a Glycyl lysine isopeptide (Lys-Gly) (interchain with G-Cter in ubiquitin) linkage.

This sequence belongs to the histone H2B family. As to quaternary structure, the nucleosome is a histone octamer containing two molecules each of H2A, H2B, H3 and H4 assembled in one H3-H4 heterotetramer and two H2A-H2B heterodimers. The octamer wraps approximately 147 bp of DNA. Can be acetylated to form H2BK6ac and H2BK33ac. Post-translationally, monoubiquitinated by BRE1 to form H2BK143ub1 and deubiquitinated by UBP26. Required for heterochromatic histone H3 di- and trimethylation at H3K4me. May give a specific tag for epigenetic transcriptional activation.

The protein localises to the nucleus. The protein resides in the chromosome. Core component of nucleosome. Nucleosomes wrap and compact DNA into chromatin, limiting DNA accessibility to the cellular machineries which require DNA as a template. Histones thereby play a central role in transcription regulation, DNA repair, DNA replication and chromosomal stability. DNA accessibility is regulated via a complex set of post-translational modifications of histones, also called histone code, and nucleosome remodeling. The protein is Histone H2B.11 (H2B.11) of Oryza sativa subsp. indica (Rice).